Consider the following 313-residue polypeptide: Putative S-adenosyl-L-methionine-dependent methyltransferase MAV_5149 (313 aa).

S-adenosyl-L-methionine is bound by residues Asp-135 and 164–165 (DL).

The protein belongs to the UPF0677 family.

In terms of biological role, exhibits S-adenosyl-L-methionine-dependent methyltransferase activity. This is Putative S-adenosyl-L-methionine-dependent methyltransferase MAV_5149 from Mycobacterium avium (strain 104).